Consider the following 382-residue polypeptide: Pyrimidine monooxygenase RutA (382 aa).

FMN is bound by residues 68–69, N134, E143, 159–160, and S209; these read IK and RY.

It belongs to the NtaA/SnaA/DszA monooxygenase family. RutA subfamily.

The catalysed reaction is uracil + FMNH2 + NADH + O2 = (Z)-3-ureidoacrylate + FMN + NAD(+) + H2O + H(+). It carries out the reaction thymine + FMNH2 + NADH + O2 = (Z)-2-methylureidoacrylate + FMN + NAD(+) + H2O + H(+). Catalyzes the pyrimidine ring opening between N-3 and C-4 by an unusual flavin hydroperoxide-catalyzed mechanism, adding oxygen atoms in the process to yield ureidoacrylate peracid, that immediately reacts with FMN forming ureidoacrylate and FMN-N(5)-oxide. The FMN-N(5)-oxide reacts spontaneously with NADH to produce FMN. Requires the flavin reductase RutF to regenerate FMN in vivo. This chain is Pyrimidine monooxygenase RutA, found in Escherichia coli (strain 55989 / EAEC).